A 722-amino-acid polypeptide reads, in one-letter code: Polyribonucleotide nucleotidyltransferase (722 aa).

Positions 505 and 511 each coordinate Mg(2+). One can recognise a KH domain in the interval 572-631 (PSITTIKIHPDKIRDVIGKGGATIRGICDETGASIDLDDDGNVKIYADNAAAAQAAVNRV). An S1 motif domain is found at 641–709 (GAIYKGRVER…NRGRVKLSMK (69 aa)).

This sequence belongs to the polyribonucleotide nucleotidyltransferase family. As to quaternary structure, component of the RNA degradosome, which is a multiprotein complex involved in RNA processing and mRNA degradation. It depends on Mg(2+) as a cofactor.

It localises to the cytoplasm. The catalysed reaction is RNA(n+1) + phosphate = RNA(n) + a ribonucleoside 5'-diphosphate. Functionally, involved in mRNA degradation. Catalyzes the phosphorolysis of single-stranded polyribonucleotides processively in the 3'- to 5'-direction. The protein is Polyribonucleotide nucleotidyltransferase of Marinobacter nauticus (strain ATCC 700491 / DSM 11845 / VT8) (Marinobacter aquaeolei).